Consider the following 431-residue polypeptide: Tol-Pal system protein TolB (431 aa).

The N-terminal stretch at 1 to 26 (MSLMTKLGFRALVASCLITAGSAANA) is a signal peptide. The interval 406–431 (DGSAPPQILSVQGGSVREPSWGPFMQ) is disordered.

This sequence belongs to the TolB family. The Tol-Pal system is composed of five core proteins: the inner membrane proteins TolA, TolQ and TolR, the periplasmic protein TolB and the outer membrane protein Pal. They form a network linking the inner and outer membranes and the peptidoglycan layer.

The protein resides in the periplasm. Functionally, part of the Tol-Pal system, which plays a role in outer membrane invagination during cell division and is important for maintaining outer membrane integrity. This chain is Tol-Pal system protein TolB, found in Burkholderia orbicola (strain AU 1054).